A 1117-amino-acid chain; its full sequence is Sodium-driven chloride bicarbonate exchanger (1117 aa).

Positions 1 to 14 are enriched in polar residues; sequence MQSGTCESFQSLSH. Disordered stretches follow at residues 1 to 26, 57 to 94, 244 to 312, and 456 to 475; these read MQSG…VDRG, GRKS…FDTP, KQSE…PHQQ, and NGTA…GPEL. Residues 1-508 lie on the Cytoplasmic side of the membrane; the sequence is MQSGTCESFQ…DFTDALSLQC (508 aa). The span at 15-26 shows a compositional bias: basic and acidic residues; that stretch reads QRNDEEAVVDRG. A compositionally biased stretch (basic residues) spans 58 to 75; sequence RKSHRRHRHRGHKHRKRD. Positions 76 to 89 are enriched in basic and acidic residues; sequence RERDSGLEDGRESP. Ser-88 carries the phosphoserine modification. Thr-93 is modified (phosphothreonine). Positions 247–263 are enriched in polar residues; it reads EPNSMDKNAGQVVSPQS. Ser-275 carries the post-translational modification Phosphoserine. The helical transmembrane segment at 509–529 threads the bilayer; sequence LASFLFLYCACMSPVITFGGL. Over 530-537 the chain is Extracellular; the sequence is LGEATEGR. The helical transmembrane segment at 538–558 threads the bilayer; the sequence is ISAIESLFGASMTGIAYSLFG. At 559–561 the chain is on the cytoplasmic side; the sequence is GQP. A helical transmembrane segment spans residues 562–582; sequence LTILGSTGPVLVFEKILFKFC. The Extracellular portion of the chain corresponds to 583–595; sequence KEYGLSYLSLRAS. Residues 596–616 traverse the membrane as a helical segment; the sequence is IGLWTATLCIILVATDASSLV. At 617–625 the chain is on the cytoplasmic side; that stretch reads CYITRFTEE. A helical membrane pass occupies residues 626 to 646; the sequence is AFASLICIIFIYEALEKLFEL. At 647 to 719 the chain is on the extracellular side; the sequence is SEAYPINMHN…VGRACGHEHP (73 aa). N-linked (GlcNAc...) asparagine glycans are attached at residues Asn-673, Asn-676, Asn-686, and Asn-696. The helical transmembrane segment at 720 to 740 threads the bilayer; sequence YVPDVLFWSVILFFSTVTLSA. Residues 741–761 lie on the Cytoplasmic side of the membrane; the sequence is TLKQFKTSRYFPTKVRSIVSD. The helical transmembrane segment at 762–782 threads the bilayer; sequence FAVFLTILCMVLIDYAIGIPS. Topologically, residues 783-808 are extracellular; the sequence is PKLQVPSVFKPTRDDRGWFVTPLGPN. The chain crosses the membrane as a helical span at residues 809–829; sequence PWWTVIAAIIPALLCTILIFM. The Cytoplasmic portion of the chain corresponds to 830-854; sequence DQQITAVIINRKEHKLKKGCGYHLD. A helical membrane pass occupies residues 855 to 875; sequence LLMVAVMLGVCSIMGLPWFVA. The Extracellular portion of the chain corresponds to 876 to 911; it reads ATVLSITHVNSLKLESECSAPGEQPKFLGIREQRVT. A helical membrane pass occupies residues 912–932; it reads GLMIFILMGSSVFMTSILKFI. At 933-934 the chain is on the cytoplasmic side; sequence PM. The helical transmembrane segment at 935-955 threads the bilayer; that stretch reads PVLYGVFLYMGASSLKGIQFF. The Extracellular segment spans residues 956–997; it reads DRIKLFWMPAKHQPDFIYLRHVPLRKVHLFTVIQMSCLGLLW. The helical transmembrane segment at 998-1018 threads the bilayer; sequence IIKVSRAAIVFPMMVLALVFV. Residues 1019 to 1117 are Cytoplasmic-facing; the sequence is RKLMDFLFTK…SSFPSKSSPS (99 aa). 2 positions are modified to phosphoserine: Ser-1056 and Ser-1084.

This sequence belongs to the anion exchanger (TC 2.A.31) family. Post-translationally, N-glycosylated.

The protein localises to the basolateral cell membrane. Its subcellular location is the apical cell membrane. It is found in the cell projection. It localises to the dendrite. The protein resides in the axon. The protein localises to the perikaryon. Its subcellular location is the presynapse. It is found in the postsynapse. In terms of biological role, sodium/bicarbonate cotransporter which plays an important role in regulating intracellular pH. Has been shown to act as a sodium/bicarbonate cotransporter in exchange for intracellular chloride. Has also been shown to act as a sodium/biocarbonate cotransporter which does not couple net influx of bicarbonate to net efflux of chloride, with the observed chloride efflux being due to chloride self-exchange. Controls neuronal pH and may contribute to the secretion of cerebrospinal fluid. Acting on presynaptic intracellular pH, it promotes GABA release, reduces the excitability of CA1 pyramidal neurons, and modulates short-term synaptic plasticity. Required in retinal cells to maintain normal pH which is necessary for normal vision. In the kidney, likely to mediate bicarbonate reclamation in the apical membrane of the proximal tubules. This chain is Sodium-driven chloride bicarbonate exchanger, found in Bos taurus (Bovine).